Reading from the N-terminus, the 182-residue chain is Ribosome-recycling factor (182 aa).

The protein belongs to the RRF family.

The protein resides in the cytoplasm. Responsible for the release of ribosomes from messenger RNA at the termination of protein biosynthesis. May increase the efficiency of translation by recycling ribosomes from one round of translation to another. The chain is Ribosome-recycling factor from Synechococcus sp. (strain WH7803).